A 573-amino-acid polypeptide reads, in one-letter code: Flagellin B (573 aa).

This sequence belongs to the bacterial flagellin family. Heteromer of FlaA and FlaB. A flagellar filament composed exclusively of FlaA is indistinguishable in length from that of the wild-type and shows a slight reduction in motility. The flagellar filament composed exclusively of the FlaB is severely truncated in length and greatly reduced in motility. Thus, while both flagellins are not necessary for motility, both are required for a fully active flagellar filament.

The protein localises to the secreted. It is found in the bacterial flagellum. Its function is as follows. Flagellin is the subunit protein which polymerizes to form the filaments of bacterial flagella. The protein is Flagellin B (flaB) of Campylobacter coli.